Here is a 252-residue protein sequence, read N- to C-terminus: Imidazole glycerol phosphate synthase subunit HisF (252 aa).

Residues D11 and D130 contribute to the active site.

This sequence belongs to the HisA/HisF family. Heterodimer of HisH and HisF.

The protein resides in the cytoplasm. It catalyses the reaction 5-[(5-phospho-1-deoxy-D-ribulos-1-ylimino)methylamino]-1-(5-phospho-beta-D-ribosyl)imidazole-4-carboxamide + L-glutamine = D-erythro-1-(imidazol-4-yl)glycerol 3-phosphate + 5-amino-1-(5-phospho-beta-D-ribosyl)imidazole-4-carboxamide + L-glutamate + H(+). Its pathway is amino-acid biosynthesis; L-histidine biosynthesis; L-histidine from 5-phospho-alpha-D-ribose 1-diphosphate: step 5/9. Its function is as follows. IGPS catalyzes the conversion of PRFAR and glutamine to IGP, AICAR and glutamate. The HisF subunit catalyzes the cyclization activity that produces IGP and AICAR from PRFAR using the ammonia provided by the HisH subunit. The sequence is that of Imidazole glycerol phosphate synthase subunit HisF from Hyphomonas neptunium (strain ATCC 15444).